Consider the following 185-residue polypeptide: Ion-translocating oxidoreductase complex subunit B (185 aa).

Positions 1 to 26 (MNHILLIILIFAALALIFGLLLGFAA) are hydrophobic. One can recognise a 4Fe-4S domain in the interval 32–90 (ESDPIVDQLDALLPQTQCGQCGYPGCRPYAEAIANGDSINKCVPGGAQTIQNIADLMGV). [4Fe-4S] cluster contacts are provided by cysteine 49, cysteine 52, cysteine 57, cysteine 73, cysteine 115, cysteine 118, cysteine 121, cysteine 125, cysteine 145, cysteine 148, cysteine 151, and cysteine 155. 4Fe-4S ferredoxin-type domains follow at residues 106-135 (RVAFIHENLCIGCTKCIQACPVDAIIGAPK) and 136-165 (LMHTILRSECTGCDLCVDPCPTNCIEMIEL).

The protein belongs to the 4Fe4S bacterial-type ferredoxin family. RnfB subfamily. In terms of assembly, the complex is composed of six subunits: RnfA, RnfB, RnfC, RnfD, RnfE and RnfG. The cofactor is [4Fe-4S] cluster.

It localises to the cell inner membrane. In terms of biological role, part of a membrane-bound complex that couples electron transfer with translocation of ions across the membrane. The chain is Ion-translocating oxidoreductase complex subunit B from Tolumonas auensis (strain DSM 9187 / NBRC 110442 / TA 4).